The chain runs to 665 residues: MALLKVAPSRLLSRALQLASRVQNCTPTVTTARRNFHFTVYGRKDTSAKVSDSISTQYPVVDHEFDAVVVGAGGAGLRAAFGLSEAGFNTACITKLFPTRSHTVAAQGGINAALGNMEDDDWRWHFYDTVKGSDWLGDQDAIHYMTEQAPASVIELENYGMPFSRTEQGKIYQRAFGGQSLKYGKGGQAHRCCCVADRTGHSLLHTLYGRSLRYDTSYFVEYFALDLLMENGECRGVIALCMEDGSIHRFRAKNTVIATGGYGRTFFSCTSAHTSTGDGTAMVTRAGLPCQDLEFVQFHPTGIYGAGCLITEGCRGEGGILINSEGERFMERYAPVAKDLASRDVVSRSMTIEIREGRGCGKDKDHVYLQLHHLPPSQLASRLPGISETAMIFAGVDVTKEPIPVLPTVHYNMGGIPTNYKGQVITHVNGEDRVVPGLYSCGEAASASVHGANRLGANSLLDLVVFGRACALSIAESCKPGEAVPSIKENAGEESVANLDKLRYANGSTRTSEIRINMQKTMQNHAAVFRTGSVLKEGCEKLSVINSSMDDIKTFDRGIVWNTDLVETLELQNLMLCALQTINGAEARKESRGAHAREDYKVRIDEYDFSKPLQGQQKKSFNEHWRKHTLSYVDKKGKVSLEYRPVIDTTLNEDCASVPPAIRSY.

Residues 1-45 (MALLKVAPSRLLSRALQLASRVQNCTPTVTTARRNFHFTVYGRKD) constitute a mitochondrion transit peptide. Positions 72, 75, 94, 95, and 101 each coordinate FAD. Histidine 102 bears the Tele-8alpha-FAD histidine mark. Positions 103, 108, 224, and 278 each coordinate FAD. The oxaloacetate site is built by histidine 299, arginine 343, and histidine 410. Residue arginine 343 is the Proton acceptor of the active site. Glutamate 443 serves as a coordination point for FAD. The oxaloacetate site is built by arginine 454 and alanine 457. FAD-binding residues include serine 459 and leucine 460.

Belongs to the FAD-dependent oxidoreductase 2 family. FRD/SDH subfamily. In terms of assembly, component of complex II composed of four subunits: a flavoprotein (FP), an iron-sulfur protein (IP), and a cytochrome b composed of a large and a small subunit. FAD is required as a cofactor.

The protein resides in the mitochondrion inner membrane. The enzyme catalyses a ubiquinone + succinate = a ubiquinol + fumarate. It catalyses the reaction (R)-malate + a quinone = enol-oxaloacetate + a quinol. It carries out the reaction (S)-malate + a quinone = enol-oxaloacetate + a quinol. It functions in the pathway carbohydrate metabolism; tricarboxylic acid cycle; fumarate from succinate (eukaryal route): step 1/1. With respect to regulation, enol-oxaloacetate inhibits the succinate dehydrogenase activity. In terms of biological role, flavoprotein (FP) subunit of succinate dehydrogenase (SDH) that is involved in complex II of the mitochondrial electron transport chain and is responsible for transferring electrons from succinate to ubiquinone (coenzyme Q). SDH also oxidizes malate to the non-canonical enol form of oxaloacetate, enol-oxaloacetate. Enol-oxaloacetate, which is a potent inhibitor of the succinate dehydrogenase activity, is further isomerized into keto-oxaloacetate. The protein is Succinate dehydrogenase [ubiquinone] flavoprotein subunit A, mitochondrial (sdha-a) of Xenopus laevis (African clawed frog).